The chain runs to 267 residues: Acyl-[acyl-carrier-protein]--UDP-N-acetylglucosamine O-acyltransferase (267 aa).

This sequence belongs to the transferase hexapeptide repeat family. LpxA subfamily. Homotrimer.

The protein localises to the cytoplasm. It carries out the reaction a (3R)-hydroxyacyl-[ACP] + UDP-N-acetyl-alpha-D-glucosamine = a UDP-3-O-[(3R)-3-hydroxyacyl]-N-acetyl-alpha-D-glucosamine + holo-[ACP]. The protein operates within glycolipid biosynthesis; lipid IV(A) biosynthesis; lipid IV(A) from (3R)-3-hydroxytetradecanoyl-[acyl-carrier-protein] and UDP-N-acetyl-alpha-D-glucosamine: step 1/6. Involved in the biosynthesis of lipid A, a phosphorylated glycolipid that anchors the lipopolysaccharide to the outer membrane of the cell. This is Acyl-[acyl-carrier-protein]--UDP-N-acetylglucosamine O-acyltransferase from Proteus mirabilis (strain HI4320).